The primary structure comprises 182 residues: Adenine phosphoribosyltransferase (182 aa).

It belongs to the purine/pyrimidine phosphoribosyltransferase family. In terms of assembly, homodimer.

It is found in the cytoplasm. It carries out the reaction AMP + diphosphate = 5-phospho-alpha-D-ribose 1-diphosphate + adenine. It functions in the pathway purine metabolism; AMP biosynthesis via salvage pathway; AMP from adenine: step 1/1. Catalyzes a salvage reaction resulting in the formation of AMP, that is energically less costly than de novo synthesis. The chain is Adenine phosphoribosyltransferase from Wolinella succinogenes (strain ATCC 29543 / DSM 1740 / CCUG 13145 / JCM 31913 / LMG 7466 / NCTC 11488 / FDC 602W) (Vibrio succinogenes).